Reading from the N-terminus, the 310-residue chain is Vomeronasal type-1 receptor 47 (310 aa).

Residues 1 to 16 (MNENSRLHTHSNIRNT) are Extracellular-facing. The helical transmembrane segment at 17-37 (FFSEIGIGISGNSFLLLFHII) threads the bilayer. Residues 38 to 49 (KFFRGHRPRLTD) lie on the Cytoplasmic side of the membrane. A helical transmembrane segment spans residues 50 to 70 (LPIGLLSLIHLLMLLVAAVIA). Residues 71-91 (TDIFISWRGWNDIICKFLVYL) are Extracellular-facing. Cysteine 85 and cysteine 172 are oxidised to a cystine. Residues 92-114 (YRSLRGLSLCTTSMLSVLQAIIL) form a helical membrane-spanning segment. Topologically, residues 115-131 (SPRSYCLAKFKRKSSHN) are cytoplasmic. A helical transmembrane segment spans residues 132-152 (ISCAIIFLSVLYMSISSHLFI). The Extracellular portion of the chain corresponds to 153–193 (SITATLNLTMNNFLYVSQSCSLLPLSYLMQSMYSTLLVLRE). N-linked (GlcNAc...) asparagine glycosylation is present at asparagine 159. Residues 194–214 (VFLIGLMVLSTSYMVALLCMH) traverse the membrane as a helical segment. Topologically, residues 215 to 238 (RKQAQNLQGTSLSLKTAPEQRATQ) are cytoplasmic. A helical membrane pass occupies residues 239-259 (TILMLMTFFVLMSIFDSIVSS). The Extracellular portion of the chain corresponds to 260–269 (SRAMFLDDST). A helical membrane pass occupies residues 270–290 (CYSIYIFVMHIYATVSPFVFM). Residues 291–310 (STEKHLVNFFRSMCEWIINM) are Cytoplasmic-facing.

Belongs to the G-protein coupled receptor 1 family.

The protein resides in the cell membrane. Putative pheromone receptor implicated in the regulation of social and reproductive behavior. The sequence is that of Vomeronasal type-1 receptor 47 (Vmn1r47) from Mus musculus (Mouse).